The following is a 179-amino-acid chain: UPF0302 protein BLi02393/BL02764 (179 aa).

Belongs to the UPF0302 family.

The chain is UPF0302 protein BLi02393/BL02764 from Bacillus licheniformis (strain ATCC 14580 / DSM 13 / JCM 2505 / CCUG 7422 / NBRC 12200 / NCIMB 9375 / NCTC 10341 / NRRL NRS-1264 / Gibson 46).